A 30-amino-acid chain; its full sequence is Cyclotide cter-H (30 aa).

A cross-link (cyclopeptide (Gly-Asp)) is located at residues 1-30; it reads GLPCGESCVFIPCITTVVGCSCKNKVCYND. 3 disulfide bridges follow: Cys4-Cys20, Cys8-Cys22, and Cys13-Cys27.

In terms of processing, contains 3 disulfide bonds. This is a cyclic peptide.

In terms of biological role, probably participates in a plant defense mechanism. The polypeptide is Cyclotide cter-H (Clitoria ternatea (Butterfly pea)).